The sequence spans 388 residues: Large ribosomal subunit protein uL3A (388 aa).

Residues 1–10 show a composition bias toward basic and acidic residues; sequence MSHCKFEQPR. Residues 1 to 34 form a disordered region; that stretch reads MSHCKFEQPRHGSLGFLPRKRASRQRGKVKAFPK. Serine 13 carries the post-translational modification Phosphoserine. Residues 18 to 31 show a composition bias toward basic residues; it reads PRKRASRQRGKVKA. Phosphoserine is present on residues serine 65, serine 140, serine 143, serine 207, serine 295, and serine 355. Phosphothreonine is present on threonine 372.

The protein belongs to the universal ribosomal protein uL3 family. Component of the large ribosomal subunit (LSU). Mature yeast ribosomes consist of a small (40S) and a large (60S) subunit. The 40S small subunit contains 1 molecule of ribosomal RNA (18S rRNA) and at least 33 different proteins. The large 60S subunit contains 3 rRNA molecules (25S, 5.8S and 5S rRNA) and at least 46 different proteins. uL3 forms together with ES39L one of the contact sites for the signal recognition particle that targets ribosomes to the endoplasmic reticulum membrane.

It localises to the cytoplasm. In terms of biological role, component of the ribosome, a large ribonucleoprotein complex responsible for the synthesis of proteins in the cell. The small ribosomal subunit (SSU) binds messenger RNAs (mRNAs) and translates the encoded message by selecting cognate aminoacyl-transfer RNA (tRNA) molecules. The large subunit (LSU) contains the ribosomal catalytic site termed the peptidyl transferase center (PTC), which catalyzes the formation of peptide bonds, thereby polymerizing the amino acids delivered by tRNAs into a polypeptide chain. The nascent polypeptides leave the ribosome through a tunnel in the LSU and interact with protein factors that function in enzymatic processing, targeting, and the membrane insertion of nascent chains at the exit of the ribosomal tunnel. uL3 plays a role in coordinating processes of accommodating the aminoacyl-tRNA in the PTC. The chain is Large ribosomal subunit protein uL3A (rpl301) from Schizosaccharomyces pombe (strain 972 / ATCC 24843) (Fission yeast).